The primary structure comprises 577 residues: 2-succinyl-5-enolpyruvyl-6-hydroxy-3-cyclohexene-1-carboxylate synthase (577 aa).

The protein belongs to the TPP enzyme family. MenD subfamily. Homodimer. Mg(2+) serves as cofactor. Requires Mn(2+) as cofactor. It depends on thiamine diphosphate as a cofactor.

It carries out the reaction isochorismate + 2-oxoglutarate + H(+) = 5-enolpyruvoyl-6-hydroxy-2-succinyl-cyclohex-3-ene-1-carboxylate + CO2. It participates in quinol/quinone metabolism; 1,4-dihydroxy-2-naphthoate biosynthesis; 1,4-dihydroxy-2-naphthoate from chorismate: step 2/7. The protein operates within quinol/quinone metabolism; menaquinone biosynthesis. Its function is as follows. Catalyzes the thiamine diphosphate-dependent decarboxylation of 2-oxoglutarate and the subsequent addition of the resulting succinic semialdehyde-thiamine pyrophosphate anion to isochorismate to yield 2-succinyl-5-enolpyruvyl-6-hydroxy-3-cyclohexene-1-carboxylate (SEPHCHC). The chain is 2-succinyl-5-enolpyruvyl-6-hydroxy-3-cyclohexene-1-carboxylate synthase from Enterococcus faecalis (strain ATCC 700802 / V583).